We begin with the raw amino-acid sequence, 344 residues long: Tetraacyldisaccharide 4'-kinase (344 aa).

65 to 72 (HAGGTGKT) is a binding site for ATP.

It belongs to the LpxK family.

The enzyme catalyses a lipid A disaccharide + ATP = a lipid IVA + ADP + H(+). Its pathway is glycolipid biosynthesis; lipid IV(A) biosynthesis; lipid IV(A) from (3R)-3-hydroxytetradecanoyl-[acyl-carrier-protein] and UDP-N-acetyl-alpha-D-glucosamine: step 6/6. Transfers the gamma-phosphate of ATP to the 4'-position of a tetraacyldisaccharide 1-phosphate intermediate (termed DS-1-P) to form tetraacyldisaccharide 1,4'-bis-phosphate (lipid IVA). The polypeptide is Tetraacyldisaccharide 4'-kinase (Neisseria meningitidis serogroup B (strain ATCC BAA-335 / MC58)).